Consider the following 385-residue polypeptide: MTRTLRITYSLSFLGLLVGMGAWSTGGLQSFQRTEQMTLLNGKLAKAAETHYDAEFPIKRLGTNVWAAMDFKLFNEGRPGVVLGRDQWLFSDEEFKPTAGAEQLMQENLALIRGVRDTLQQHGSQLVLAIVPAKARVYTEYLGKERPASLHDDLYNQFHAQARQANVFAPDLMAPMEQAKARGQVFLRTDTHWTPMGAEVAAQALAEAVSRQSLLNGDPQAFITEAGNTAPYKGDLTNFLPLDPLFSNLLPAPDNLQKRTTRPVDAEGDAGDALFADKQIPVALVGTSYSANPHWNFLGALQQALRSDVANYAEDGHGPLLPMLKYLQSDAFKNAAPQVVVWEFPERYLPMKNDLSSFDPQWIAQLKNSRKSEENLALSSTRTDH.

A signal peptide spans 1-21; the sequence is MTRTLRITYSLSFLGLLVGMG. Residue aspartate 190 is part of the active site. Histidine 192 functions as the Proton acceptor in the catalytic mechanism. The active-site Nucleophile is serine 288.

Belongs to the AlgJ family.

The protein localises to the cell inner membrane. Its subcellular location is the periplasm. The protein operates within glycan biosynthesis; alginate biosynthesis. Together with AlgI and AlgF, forms an inner membrane complex which probably interacts with the alginate polymerization-transport complex and adds acetyl groups at the O-2 and O-3 positions of mannuronate residues. Acetylation of alginate is important for the architecture of biofilms and increases the ability of alginate to act as a defense barrier. This is Probable alginate O-acetylase AlgJ (algJ) from Pseudomonas putida (strain ATCC 47054 / DSM 6125 / CFBP 8728 / NCIMB 11950 / KT2440).